A 299-amino-acid polypeptide reads, in one-letter code: Diphthine methyl ester synthase 1 (299 aa).

S-adenosyl-L-methionine-binding positions include Leu9, Asp85, Gly88, 113–114, Leu164, Leu222, and His247; that span reads SV.

The protein belongs to the diphthine synthase family.

Its subcellular location is the cytoplasm. It catalyses the reaction 2-[(3S)-amino-3-carboxypropyl]-L-histidyl-[translation elongation factor 2] + 4 S-adenosyl-L-methionine = diphthine methyl ester-[translation elongation factor 2] + 4 S-adenosyl-L-homocysteine + 3 H(+). It functions in the pathway protein modification; peptidyl-diphthamide biosynthesis. S-adenosyl-L-methionine-dependent methyltransferase that catalyzes four methylations of the modified target histidine residue in translation elongation factor 2 (EF-2), to form an intermediate called diphthine methyl ester. The four successive methylation reactions represent the second step of diphthamide biosynthesis. The protein is Diphthine methyl ester synthase 1 (DPH5) of Candida albicans (strain SC5314 / ATCC MYA-2876) (Yeast).